The chain runs to 275 residues: Autophagy protein 5 (275 aa).

Methionine 1 is subject to N-acetylmethionine. A Glycyl lysine isopeptide (Lys-Gly) (interchain with G-Cter in ATG12) cross-link involves residue lysine 130.

Belongs to the ATG5 family. As to quaternary structure, forms a conjugate with ATG12. Part of the minor complex composed of 4 sets of ATG12-ATG5 and ATG16L1 (400 kDa); this complex interacts with ATG3 leading to disruption of ATG7 interaction and promotion of ATG8-like proteins lipidation. Forms an 800-kDa complex composed of ATG12-ATG5 and ATG16L2. The ATG12-ATG5 conjugate interacts with RAB33A; this interaction is bridged by ATG16L1 and promotes ATG12-ATG5-ATG16L1 complex recruitment to phagophores. Interacts with TECPR1; the interaction is direct and does not take place when ATG16L1 is associated with the ATG5-ATG12 conjugate. Interacts with DHX58/RIG-1, IFIH1/MDA5 and MAVS/IPS-1 in monomeric form as well as in ATG12-ATG5 conjugate form. The interaction with MAVS is further enhanced upon vesicular stomatitis virus (VSV) infection. Interacts with ATG3. Interacts with ATG7 and ATG10. Interacts with FADD. Interacts with Bassoon/BSN; this interaction is important for the regulation of presynaptic autophagy. Interacts with ATG16L2. Conjugated to ATG12; which is essential for autophagy, but is not required for association with isolation membrane. In terms of processing, acetylated by EP300.

The protein resides in the cytoplasm. It is found in the preautophagosomal structure membrane. In terms of biological role, involved in autophagic vesicle formation. Conjugation with ATG12, through a ubiquitin-like conjugating system involving ATG7 as an E1-like activating enzyme and ATG10 as an E2-like conjugating enzyme, is essential for its function. The ATG12-ATG5 conjugate acts as an E3-like enzyme which is required for lipidation of ATG8 family proteins and their association to the vesicle membranes. Involved in mitochondrial quality control after oxidative damage, and in subsequent cellular longevity. Plays a critical role in multiple aspects of lymphocyte development and is essential for both B and T lymphocyte survival and proliferation. Required for optimal processing and presentation of antigens for MHC II. Involved in the maintenance of axon morphology and membrane structures, as well as in normal adipocyte differentiation. Promotes primary ciliogenesis through removal of OFD1 from centriolar satellites and degradation of IFT20 via the autophagic pathway. As part of the ATG8 conjugation system with ATG12 and ATG16L1, required for recruitment of LRRK2 to stressed lysosomes and induction of LRRK2 kinase activity in response to lysosomal stress. May play an important role in the apoptotic process, possibly within the modified cytoskeleton. Its expression is a relatively late event in the apoptotic process, occurring downstream of caspase activity. Plays a crucial role in IFN-gamma-induced autophagic cell death by interacting with FADD. This is Autophagy protein 5 from Sus scrofa (Pig).